Consider the following 949-residue polypeptide: Translation initiation factor IF-2 (949 aa).

Disordered stretches follow at residues 54 to 183 (FLKP…EAAP), 217 to 288 (LPAA…EVAL), and 305 to 357 (EVVA…EMQA). Composition is skewed to basic and acidic residues over residues 67-92 (DQEK…ERHI) and 101-164 (IEAK…EEAA). 2 stretches are compositionally biased toward low complexity: residues 165–183 (RAAA…EAAP) and 217–228 (LPAAAPAAPSAP). 2 stretches are compositionally biased toward basic and acidic residues: residues 235–288 (PVEE…EVAL) and 330–339 (KYQDNEDRLQ). The tr-type G domain maps to 445 to 619 (TRPPVITVMG…EMLNLQSNPT (175 aa)). The tract at residues 454–461 (GHVDHGKT) is G1. 454-461 (GHVDHGKT) lines the GTP pocket. Positions 479–483 (GITQH) are G2. Residues 501-504 (DTPG) are G3. GTP-binding positions include 501–505 (DTPGH) and 555–558 (NKID). A G4 region spans residues 555-558 (NKID). The G5 stretch occupies residues 591 to 593 (SAK).

Belongs to the TRAFAC class translation factor GTPase superfamily. Classic translation factor GTPase family. IF-2 subfamily.

It is found in the cytoplasm. Functionally, one of the essential components for the initiation of protein synthesis. Protects formylmethionyl-tRNA from spontaneous hydrolysis and promotes its binding to the 30S ribosomal subunits. Also involved in the hydrolysis of GTP during the formation of the 70S ribosomal complex. The polypeptide is Translation initiation factor IF-2 (Magnetococcus marinus (strain ATCC BAA-1437 / JCM 17883 / MC-1)).